The primary structure comprises 269 residues: Phosphate import ATP-binding protein PstB 1 (269 aa).

The region spanning 16-255 (FTTQNLDIYY…DRTGKVFGDP (240 aa)) is the ABC transporter domain. 48–55 (GPSGCGKS) lines the ATP pocket.

It belongs to the ABC transporter superfamily. Phosphate importer (TC 3.A.1.7) family. As to quaternary structure, the complex is composed of two ATP-binding proteins (PstB), two transmembrane proteins (PstC and PstA) and a solute-binding protein (PstS).

The protein resides in the cell inner membrane. The catalysed reaction is phosphate(out) + ATP + H2O = ADP + 2 phosphate(in) + H(+). Functionally, part of the ABC transporter complex PstSACB involved in phosphate import. Responsible for energy coupling to the transport system. The protein is Phosphate import ATP-binding protein PstB 1 of Synechocystis sp. (strain ATCC 27184 / PCC 6803 / Kazusa).